A 286-amino-acid chain; its full sequence is ATP synthase gamma chain (286 aa).

The protein belongs to the ATPase gamma chain family. As to quaternary structure, F-type ATPases have 2 components, CF(1) - the catalytic core - and CF(0) - the membrane proton channel. CF(1) has five subunits: alpha(3), beta(3), gamma(1), delta(1), epsilon(1). CF(0) has three main subunits: a, b and c.

The protein localises to the cell membrane. Its function is as follows. Produces ATP from ADP in the presence of a proton gradient across the membrane. The gamma chain is believed to be important in regulating ATPase activity and the flow of protons through the CF(0) complex. The protein is ATP synthase gamma chain of Bacillus anthracis (strain A0248).